We begin with the raw amino-acid sequence, 203 residues long: NADH-quinone oxidoreductase subunit C (203 aa).

Belongs to the complex I 30 kDa subunit family. As to quaternary structure, NDH-1 is composed of 14 different subunits. Subunits NuoB, C, D, E, F, and G constitute the peripheral sector of the complex.

It is found in the cell inner membrane. The enzyme catalyses a quinone + NADH + 5 H(+)(in) = a quinol + NAD(+) + 4 H(+)(out). NDH-1 shuttles electrons from NADH, via FMN and iron-sulfur (Fe-S) centers, to quinones in the respiratory chain. The immediate electron acceptor for the enzyme in this species is believed to be ubiquinone. Couples the redox reaction to proton translocation (for every two electrons transferred, four hydrogen ions are translocated across the cytoplasmic membrane), and thus conserves the redox energy in a proton gradient. This chain is NADH-quinone oxidoreductase subunit C, found in Polaromonas sp. (strain JS666 / ATCC BAA-500).